The sequence spans 319 residues: ATP-dependent 6-phosphofructokinase (319 aa).

Glycine 11 provides a ligand contact to ATP. 21 to 25 (RAVVR) contributes to the ADP binding site. ATP is bound by residues 72–73 (RC) and 102–105 (GDGS). Aspartate 103 is a binding site for Mg(2+). Residue 125-127 (TID) coordinates substrate. Aspartate 127 serves as the catalytic Proton acceptor. Arginine 154 is a binding site for ADP. Residues arginine 162 and 169-171 (MGR) contribute to the substrate site. ADP contacts are provided by residues 185 to 187 (GAE), arginine 211, and 213 to 215 (KKH). Substrate is bound by residues glutamate 222, arginine 243, and 249-252 (HVQR).

The protein belongs to the phosphofructokinase type A (PFKA) family. ATP-dependent PFK group I subfamily. Prokaryotic clade 'B1' sub-subfamily. In terms of assembly, homotetramer. Mg(2+) is required as a cofactor.

The protein resides in the cytoplasm. The enzyme catalyses beta-D-fructose 6-phosphate + ATP = beta-D-fructose 1,6-bisphosphate + ADP + H(+). It participates in carbohydrate degradation; glycolysis; D-glyceraldehyde 3-phosphate and glycerone phosphate from D-glucose: step 3/4. Its activity is regulated as follows. Allosterically activated by ADP and other diphosphonucleosides, and allosterically inhibited by phosphoenolpyruvate. Its function is as follows. Catalyzes the phosphorylation of D-fructose 6-phosphate to fructose 1,6-bisphosphate by ATP, the first committing step of glycolysis. In Bacillus cereus (strain B4264), this protein is ATP-dependent 6-phosphofructokinase.